The sequence spans 205 residues: LexA repressor (205 aa).

Positions 28-48 form a DNA-binding region, H-T-H motif; sequence RAEIAASLGFRSPNAAEEHLK. Active-site for autocatalytic cleavage activity residues include Ser122 and Lys159.

It belongs to the peptidase S24 family. Homodimer.

It catalyses the reaction Hydrolysis of Ala-|-Gly bond in repressor LexA.. In terms of biological role, represses a number of genes involved in the response to DNA damage (SOS response), including recA and lexA. Binds to the 16 bp palindromic sequence 5'-CTGTATATATATACAG-3'. In the presence of single-stranded DNA, RecA interacts with LexA causing an autocatalytic cleavage which disrupts the DNA-binding part of LexA, leading to derepression of the SOS regulon and eventually DNA repair. The sequence is that of LexA repressor from Providencia rettgeri.